Here is a 32-residue protein sequence, read N- to C-terminus: Calcitonin-2 (32 aa).

The cysteines at positions 1 and 7 are disulfide-linked. Pro-32 bears the Proline amide mark.

It belongs to the calcitonin family.

The protein localises to the secreted. Functionally, causes a rapid but short-lived drop in the level of calcium and phosphate in blood by promoting the incorporation of those ions in the bones. In Oncorhynchus gorbuscha (Pink salmon), this protein is Calcitonin-2.